A 340-amino-acid chain; its full sequence is Probable complex I intermediate-associated protein 30, mitochondrial (340 aa).

This sequence belongs to the CIA30 family.

The protein resides in the mitochondrion. Chaperone protein involved in the assembly of the mitochondrial NADH:ubiquinone oxidoreductase complex (complex I). Required for normal growth and reproduction. In Caenorhabditis elegans, this protein is Probable complex I intermediate-associated protein 30, mitochondrial (nuaf-1).